An 860-amino-acid chain; its full sequence is Leucine--tRNA ligase (860 aa).

Positions 42 to 52 (PYPSGRLHMGH) match the 'HIGH' region motif. Positions 619–623 (KMSKS) match the 'KMSKS' region motif. An ATP-binding site is contributed by lysine 622.

The protein belongs to the class-I aminoacyl-tRNA synthetase family.

It localises to the cytoplasm. It catalyses the reaction tRNA(Leu) + L-leucine + ATP = L-leucyl-tRNA(Leu) + AMP + diphosphate. The polypeptide is Leucine--tRNA ligase (Escherichia coli O6:K15:H31 (strain 536 / UPEC)).